The primary structure comprises 555 residues: T-complex protein 1 subunit eta (555 aa).

The protein belongs to the TCP-1 chaperonin family. In terms of assembly, heterooligomeric complex of about 850 to 900 kDa that forms two stacked rings, 12 to 16 nm in diameter.

Its subcellular location is the cytoplasm. Molecular chaperone; assists the folding of proteins upon ATP hydrolysis. Known to play a role, in vitro, in the folding of actin and tubulin. The polypeptide is T-complex protein 1 subunit eta (cct7) (Dictyostelium discoideum (Social amoeba)).